Reading from the N-terminus, the 288-residue chain is MNNLSFSELCCLFCCPPCPGKIASKLAFLPPDPTYTLMCDESGSRWTLHLSERADWQYSSREKDAIECFMTRTSKGNRIACMFVRCSPNAKYTLLFSHGNAVDLGQMSSFYIGLGSRINCNIFSYDYSGYGASSGKPTEKNLYADIEAAWLALRTRYGIRPENVIIYGQSIGTVPSVDLAARYESAAVILHSPLTSGMRVAFPDTKKTYCFDAFPNIDKISKITSPVLIIHGTEDEVIDFSHGLALFERCQRPVEPLWVEGAGHNDVELYGQYLERLKQFVSQELVNL.

Catalysis depends on charge relay system residues Ser-170, Asp-235, and His-264. Ser-282 carries the phosphoserine modification.

The protein belongs to the AB hydrolase superfamily. ABHD17 family. In terms of processing, palmitoylated on cysteine residues located in a cysteine cluster at the N-terminus which promotes membrane localization. Palmitoylation is required for post-synaptic localization and for depalmitoylating activity towards DLG4/PSD95.

It localises to the cell membrane. Its subcellular location is the recycling endosome membrane. The protein localises to the cell projection. It is found in the dendritic spine. The protein resides in the postsynaptic density membrane. It carries out the reaction S-hexadecanoyl-L-cysteinyl-[protein] + H2O = L-cysteinyl-[protein] + hexadecanoate + H(+). Its activity is regulated as follows. Inhibited by palmostatin-B. Its function is as follows. Hydrolyzes fatty acids from S-acylated cysteine residues in proteins. Has depalmitoylating activity towards DLG4/PSD95. Has depalmitoylating activity towards GAP43. Has depalmitoylating activity towards MAP6. Has depalmitoylating activity towards NRAS. In Homo sapiens (Human), this protein is Alpha/beta hydrolase domain-containing protein 17B.